We begin with the raw amino-acid sequence, 166 residues long: MANNDQKRDEGYIEKLVQVNRVAKTVKGGRIFTFTALTVVGDGKGRVGFGRGKSREVPAAIQKAMEAARRNMIQVDLKGTTLQYATKAAHGASKVYMQPASEGTGIIAGGAMRAVLEVAGVQNVLAKCYGSTNPVNVVHATFKGLKAMQSPESIAAKRGKTVEEIF.

Residues 12–75 (YIEKLVQVNR…EAARRNMIQV (64 aa)) form the S5 DRBM domain.

This sequence belongs to the universal ribosomal protein uS5 family. Part of the 30S ribosomal subunit. Contacts proteins S4 and S8.

Its function is as follows. With S4 and S12 plays an important role in translational accuracy. Functionally, located at the back of the 30S subunit body where it stabilizes the conformation of the head with respect to the body. In Pseudomonas entomophila (strain L48), this protein is Small ribosomal subunit protein uS5.